We begin with the raw amino-acid sequence, 428 residues long: Enolase (428 aa).

Gln163 is a (2R)-2-phosphoglycerate binding site. The active-site Proton donor is the Glu205. Residues Asp242, Glu283, and Asp310 each coordinate Mg(2+). Positions 335, 364, 365, and 386 each coordinate (2R)-2-phosphoglycerate. Lys335 acts as the Proton acceptor in catalysis.

The protein belongs to the enolase family. It depends on Mg(2+) as a cofactor.

The protein resides in the cytoplasm. It is found in the secreted. The protein localises to the cell surface. It carries out the reaction (2R)-2-phosphoglycerate = phosphoenolpyruvate + H2O. It functions in the pathway carbohydrate degradation; glycolysis; pyruvate from D-glyceraldehyde 3-phosphate: step 4/5. Functionally, catalyzes the reversible conversion of 2-phosphoglycerate (2-PG) into phosphoenolpyruvate (PEP). It is essential for the degradation of carbohydrates via glycolysis. The sequence is that of Enolase from Streptomyces avermitilis (strain ATCC 31267 / DSM 46492 / JCM 5070 / NBRC 14893 / NCIMB 12804 / NRRL 8165 / MA-4680).